The following is an 89-amino-acid chain: MALSTEKKAEILKEYGLHETDTGSPEAQVALLTSRINNLTEHLKDHKHDHHSRRGLLLMVGRRRGLLKYLAANDVDRYRDLISRLGLRR.

Belongs to the universal ribosomal protein uS15 family. Part of the 30S ribosomal subunit. Forms a bridge to the 50S subunit in the 70S ribosome, contacting the 23S rRNA.

One of the primary rRNA binding proteins, it binds directly to 16S rRNA where it helps nucleate assembly of the platform of the 30S subunit by binding and bridging several RNA helices of the 16S rRNA. Its function is as follows. Forms an intersubunit bridge (bridge B4) with the 23S rRNA of the 50S subunit in the ribosome. This is Small ribosomal subunit protein uS15 from Corynebacterium aurimucosum (strain ATCC 700975 / DSM 44827 / CIP 107346 / CN-1) (Corynebacterium nigricans).